Reading from the N-terminus, the 276-residue chain is MKGQILREMRVLKAITPDFEVQRRVAFIKAKLREAHSKTLVLGISGGVDSSVAGRLCQLAVNELNQETDSQQYRFIAVRLPYLVQKDEHEAQMACEFIQPSKLVTVNVGSGSDGIHTETLTGFKAAGLELPEASKVDFVKGNVKARMRMIAQYEIAGLTGGLVVGTDHSAENITGFYTKWGDGACDLAPLFGLNKRQVRQIARYLGAPDVLVVKAPTADLECHRPGLEDEVALGLTYDQIDDFLEGKEVPRSAEDKLIGIYKATQHKRQPIPTIYD.

Gly43–Ser50 provides a ligand contact to ATP. A Mg(2+)-binding site is contributed by Asp49. Residue Arg146 coordinates deamido-NAD(+). Position 166 (Thr166) interacts with ATP. Glu171 is a binding site for Mg(2+). Deamido-NAD(+)-binding residues include Lys179 and Asp186. ATP-binding residues include Lys195 and Thr217. His266–Lys267 lines the deamido-NAD(+) pocket.

It belongs to the NAD synthetase family. Homodimer.

The catalysed reaction is deamido-NAD(+) + NH4(+) + ATP = AMP + diphosphate + NAD(+) + H(+). It functions in the pathway cofactor biosynthesis; NAD(+) biosynthesis; NAD(+) from deamido-NAD(+) (ammonia route): step 1/1. Functionally, catalyzes the ATP-dependent amidation of deamido-NAD to form NAD. Uses ammonia as a nitrogen source. The polypeptide is NH(3)-dependent NAD(+) synthetase (Shewanella amazonensis (strain ATCC BAA-1098 / SB2B)).